The following is a 317-amino-acid chain: D-alanine--D-alanine ligase (317 aa).

An ATP-grasp domain is found at 104–303 (KRVWLQHGLP…YAELCVAILA (200 aa)). ATP is bound at residue 130–185 (PDRLGLPLILKPPHEGSTVGITKVAACADMEQAYAAASHFDEVVLAEQFVRGRELT). Residues D257, E270, and N272 each contribute to the Mg(2+) site.

Belongs to the D-alanine--D-alanine ligase family. Mg(2+) is required as a cofactor. Requires Mn(2+) as cofactor.

The protein localises to the cytoplasm. It carries out the reaction 2 D-alanine + ATP = D-alanyl-D-alanine + ADP + phosphate + H(+). It participates in cell wall biogenesis; peptidoglycan biosynthesis. In terms of biological role, cell wall formation. The chain is D-alanine--D-alanine ligase from Bordetella avium (strain 197N).